A 1165-amino-acid polypeptide reads, in one-letter code: Chitin synthase 3 (1165 aa).

Residues 1–170 (MTGLNGDDPD…ETNDTLSFWQ (170 aa)) lie on the Cytoplasmic side of the membrane. Disordered stretches follow at residues 19 to 53 (DEESLLRSRHSVGSGAPHRQGSLVRPERSRLNNPD) and 74 to 97 (PSSTGVNPNATRRSGSLRSKGSVR). Over residues 74–92 (PSSTGVNPNATRRSGSLRS) the composition is skewed to polar residues. A Glycyl lysine isopeptide (Lys-Gly) (interchain with G-Cter in ubiquitin) cross-link involves residue Lys136. The helical transmembrane segment at 171-191 (MYCYFITFWAPAPILAFCGMP) threads the bilayer. The Extracellular portion of the chain corresponds to 192 to 340 (KKERQMAWRE…PNFTVENYAG (149 aa)). N-linked (GlcNAc...) asparagine glycans are attached at residues Asn303 and Asn332. Residues 341–354 (WNCHTSKEDRDAFY) traverse the membrane as a helical segment. The Cytoplasmic portion of the chain corresponds to 355–452 (GLKSKADVYF…SKTVGCIASD (98 aa)). The helical transmembrane segment at 453–473 (VVLYVSLVFILSVVIIKFIIA) threads the bilayer. Over 474-891 (CYFRWTVARK…EYYISHHQAK (418 aa)) the chain is Extracellular. Ser537 is modified (phosphoserine). At Thr538 the chain carries Phosphothreonine. A helical membrane pass occupies residues 892 to 910 (AFESVFGSVTCLPGCFSMY). Topologically, residues 911–1029 (RIKSPKGSDG…SMQFVIGIEL (119 aa)) are cytoplasmic. A helical membrane pass occupies residues 1030-1050 (IGTMVLPLAICFTIYVIIFAI). Over 1051-1055 (VSKPT) the chain is Extracellular. A helical membrane pass occupies residues 1056 to 1076 (PVITLVLLAIILGLPGLIVVI). Topologically, residues 1077–1165 (TATRWSYLWW…RKEESDSFVA (89 aa)) are cytoplasmic.

It belongs to the chitin synthase family. Class IV subfamily. Homodimer. May form higher order oligomers. Seems to interact with BNI4 and SKT5 which link CHS3 to septins. Glycosylated. In terms of processing, palmitoylated by PFA4; required for proper export from the ER.

It is found in the cell membrane. Its subcellular location is the bud neck. It localises to the cytoplasmic vesicle membrane. It carries out the reaction [(1-&gt;4)-N-acetyl-beta-D-glucosaminyl](n) + UDP-N-acetyl-alpha-D-glucosamine = [(1-&gt;4)-N-acetyl-beta-D-glucosaminyl](n+1) + UDP + H(+). In terms of biological role, polymerizes chitin, a structural polymer of the cell wall and septum, by transferring the sugar moiety of UDP-GlcNAc to the non-reducing end of the growing chitin polymer. Appears to be responsible for synthesis of the majority of the chitin found in the cell wall periphery. It is involved in the synthesis of the chitin ring that forms in the cell wall just before bud emergence. This ring remains at the base of the bud as the bud grows and ultimately forms part of the bud scar marking the division site on the mother cell. Also catalyzes the synthesis of chitin laid down during mating and spore cell-wall synthesis. In Saccharomyces cerevisiae (strain ATCC 204508 / S288c) (Baker's yeast), this protein is Chitin synthase 3.